The following is a 266-amino-acid chain: Small ribosomal subunit protein eS1 (266 aa).

The tract at residues 233–266 is disordered; the sequence is GEGGGSSAAKPSGDDTGAKVDRADGYEPPIQETV. Positions 244-257 are enriched in basic and acidic residues; the sequence is SGDDTGAKVDRADG.

Belongs to the eukaryotic ribosomal protein eS1 family. In terms of assembly, component of the small ribosomal subunit. Mature ribosomes consist of a small (40S) and a large (60S) subunit. The 40S subunit contains about 33 different proteins and 1 molecule of RNA (18S). The 60S subunit contains about 49 different proteins and 3 molecules of RNA (28S, 5.8S and 5S). Part of the small subunit (SSU) processome, composed of more than 70 proteins and the RNA chaperone small nucleolar RNA (snoRNA) U3.

It localises to the cytoplasm. Its subcellular location is the nucleus. The protein resides in the nucleolus. Functionally, component of the small ribosomal subunit. The ribosome is a large ribonucleoprotein complex responsible for the synthesis of proteins in the cell. Part of the small subunit (SSU) processome, first precursor of the small eukaryotic ribosomal subunit. During the assembly of the SSU processome in the nucleolus, many ribosome biogenesis factors, an RNA chaperone and ribosomal proteins associate with the nascent pre-rRNA and work in concert to generate RNA folding, modifications, rearrangements and cleavage as well as targeted degradation of pre-ribosomal RNA by the RNA exosome. May play a role during erythropoiesis. In Salmo salar (Atlantic salmon), this protein is Small ribosomal subunit protein eS1 (rps3a).